A 443-amino-acid polypeptide reads, in one-letter code: Tol-Pal system protein TolB (443 aa).

The N-terminal stretch at 1–33 is a signal peptide; sequence MKIGIINTKIRTVFSAFACMIAASLVCTMPARA.

This sequence belongs to the TolB family. As to quaternary structure, the Tol-Pal system is composed of five core proteins: the inner membrane proteins TolA, TolQ and TolR, the periplasmic protein TolB and the outer membrane protein Pal. They form a network linking the inner and outer membranes and the peptidoglycan layer.

It localises to the periplasm. In terms of biological role, part of the Tol-Pal system, which plays a role in outer membrane invagination during cell division and is important for maintaining outer membrane integrity. The chain is Tol-Pal system protein TolB from Brucella anthropi (strain ATCC 49188 / DSM 6882 / CCUG 24695 / JCM 21032 / LMG 3331 / NBRC 15819 / NCTC 12168 / Alc 37) (Ochrobactrum anthropi).